A 419-amino-acid polypeptide reads, in one-letter code: Histidine--tRNA ligase (419 aa).

The protein belongs to the class-II aminoacyl-tRNA synthetase family.

The protein resides in the cytoplasm. It catalyses the reaction tRNA(His) + L-histidine + ATP = L-histidyl-tRNA(His) + AMP + diphosphate + H(+). In Pyrobaculum arsenaticum (strain DSM 13514 / JCM 11321 / PZ6), this protein is Histidine--tRNA ligase.